A 134-amino-acid chain; its full sequence is D-ribose pyranase (134 aa).

Catalysis depends on H20, which acts as the Proton donor. Substrate-binding positions include D28, H101, and Y123–N125.

It belongs to the RbsD / FucU family. RbsD subfamily. As to quaternary structure, homodecamer.

The protein resides in the cytoplasm. The enzyme catalyses beta-D-ribopyranose = beta-D-ribofuranose. It functions in the pathway carbohydrate metabolism; D-ribose degradation; D-ribose 5-phosphate from beta-D-ribopyranose: step 1/2. Its function is as follows. Catalyzes the interconversion of beta-pyran and beta-furan forms of D-ribose. The sequence is that of D-ribose pyranase from Pseudomonas syringae pv. syringae (strain B728a).